Here is a 149-residue protein sequence, read N- to C-terminus: Ribonuclease pancreatic (149 aa).

The N-terminal stretch at 1 to 25 is a signal peptide; it reads MGLEKSFILFSLLVLVLGWVQPSLS. The span at 30–40 shows a compositional bias: basic and acidic residues; that stretch reads ADKFKRQHMDT. The tract at residues 30 to 49 is disordered; that stretch reads ADKFKRQHMDTEGSSNSSPT. Substrate contacts are provided by Lys32 and Arg35. His37 serves as the catalytic Proton acceptor. Cystine bridges form between Cys51–Cys109, Cys65–Cys120, Cys83–Cys135, and Cys90–Cys97. Asn62 carries N-linked (GlcNAc...) asparagine glycosylation. 66–70 serves as a coordination point for substrate; it reads KPVNT. Residue Asn87 is glycosylated (N-linked (GlcNAc...) asparagine). Residues Lys91 and Arg110 each coordinate substrate. The active-site Proton donor is the His144.

Belongs to the pancreatic ribonuclease family. Monomer. Interacts with and forms tight 1:1 complexes with RNH1. Dimerization of two such complexes may occur. Interaction with RNH1 inhibits this protein. Pancreas.

The protein localises to the secreted. The catalysed reaction is an [RNA] containing cytidine + H2O = an [RNA]-3'-cytidine-3'-phosphate + a 5'-hydroxy-ribonucleotide-3'-[RNA].. The enzyme catalyses an [RNA] containing uridine + H2O = an [RNA]-3'-uridine-3'-phosphate + a 5'-hydroxy-ribonucleotide-3'-[RNA].. Its function is as follows. Endonuclease that catalyzes the cleavage of RNA on the 3' side of pyrimidine nucleotides. Acts on single-stranded and double-stranded RNA. The protein is Ribonuclease pancreatic (RNASE1) of Niviventer cremoriventer (Dark-tailed tree rat).